The chain runs to 273 residues: 4-hydroxy-tetrahydrodipicolinate reductase (273 aa).

NAD(+)-binding positions include 12–17 (GAGGRM) and Glu-38. Arg-39 is an NADP(+) binding site. Residues 102–104 (GTT) and 126–129 (AANF) contribute to the NAD(+) site. His-159 functions as the Proton donor/acceptor in the catalytic mechanism. Residue His-160 coordinates (S)-2,3,4,5-tetrahydrodipicolinate. The active-site Proton donor is Lys-163. 169–170 (GT) serves as a coordination point for (S)-2,3,4,5-tetrahydrodipicolinate.

It belongs to the DapB family. As to quaternary structure, homotetramer.

The protein localises to the cytoplasm. The catalysed reaction is (S)-2,3,4,5-tetrahydrodipicolinate + NAD(+) + H2O = (2S,4S)-4-hydroxy-2,3,4,5-tetrahydrodipicolinate + NADH + H(+). It catalyses the reaction (S)-2,3,4,5-tetrahydrodipicolinate + NADP(+) + H2O = (2S,4S)-4-hydroxy-2,3,4,5-tetrahydrodipicolinate + NADPH + H(+). The protein operates within amino-acid biosynthesis; L-lysine biosynthesis via DAP pathway; (S)-tetrahydrodipicolinate from L-aspartate: step 4/4. In terms of biological role, catalyzes the conversion of 4-hydroxy-tetrahydrodipicolinate (HTPA) to tetrahydrodipicolinate. The sequence is that of 4-hydroxy-tetrahydrodipicolinate reductase from Pectobacterium atrosepticum (strain SCRI 1043 / ATCC BAA-672) (Erwinia carotovora subsp. atroseptica).